Here is a 163-residue protein sequence, read N- to C-terminus: Inorganic pyrophosphatase (163 aa).

Residue Glu9 participates in Mg(2+) binding. Residues Lys17, Arg31, and Tyr43 each coordinate substrate. Residues Asp53, Asp58, Asp85, and Asp90 each coordinate Mg(2+). Residue Asp90 is the Proton acceptor of the active site. Tyr127 contacts substrate.

The protein belongs to the PPase family. In terms of assembly, homohexamer. Mg(2+) serves as cofactor.

Its subcellular location is the cytoplasm. It catalyses the reaction diphosphate + H2O = 2 phosphate + H(+). Its function is as follows. Catalyzes the hydrolysis of inorganic pyrophosphate (PPi) forming two phosphate ions. The chain is Inorganic pyrophosphatase from Leifsonia xyli subsp. xyli (strain CTCB07).